The chain runs to 423 residues: 3-phosphoshikimate 1-carboxyvinyltransferase (423 aa).

3 residues coordinate 3-phosphoshikimate: Lys-28, Ser-29, and Arg-33. Lys-28 contacts phosphoenolpyruvate. 2 residues coordinate phosphoenolpyruvate: Gly-96 and Arg-124. The 3-phosphoshikimate site is built by Ser-169, Ser-170, Gln-171, Ser-198, Glu-312, and His-339. Phosphoenolpyruvate is bound at residue Gln-171. Glu-312 acts as the Proton acceptor in catalysis. Phosphoenolpyruvate is bound by residues Arg-343, Arg-384, and Lys-409.

Belongs to the EPSP synthase family. As to quaternary structure, monomer.

It is found in the cytoplasm. It carries out the reaction 3-phosphoshikimate + phosphoenolpyruvate = 5-O-(1-carboxyvinyl)-3-phosphoshikimate + phosphate. It participates in metabolic intermediate biosynthesis; chorismate biosynthesis; chorismate from D-erythrose 4-phosphate and phosphoenolpyruvate: step 6/7. Functionally, catalyzes the transfer of the enolpyruvyl moiety of phosphoenolpyruvate (PEP) to the 5-hydroxyl of shikimate-3-phosphate (S3P) to produce enolpyruvyl shikimate-3-phosphate and inorganic phosphate. This Acidothermus cellulolyticus (strain ATCC 43068 / DSM 8971 / 11B) protein is 3-phosphoshikimate 1-carboxyvinyltransferase.